The following is a 361-amino-acid chain: D-alanine--D-alanine ligase (361 aa).

The ATP-grasp domain occupies 134-344; sequence KILAQRAGVP…YTDLITKLID (211 aa). 169-224 provides a ligand contact to ATP; that stretch reads ASQLGSDLFVKPSNQGSSVGVSHVTNEKEYKVALAEAFKYDDKVLVEETVHGTEVE. Positions 297, 311, and 313 each coordinate Mg(2+).

The protein belongs to the D-alanine--D-alanine ligase family. Mg(2+) is required as a cofactor. Requires Mn(2+) as cofactor.

It localises to the cytoplasm. The catalysed reaction is 2 D-alanine + ATP = D-alanyl-D-alanine + ADP + phosphate + H(+). Its pathway is cell wall biogenesis; peptidoglycan biosynthesis. Cell wall formation. The chain is D-alanine--D-alanine ligase from Lactobacillus johnsonii (strain CNCM I-12250 / La1 / NCC 533).